A 332-amino-acid polypeptide reads, in one-letter code: 2,3-diketo-L-gulonate reductase (332 aa).

Residue His44 is the Proton donor of the active site. Residues 168-174, 224-225, and 304-306 contribute to the NAD(+) site; these read ITMVDMS, WK, and GHE.

This sequence belongs to the LDH2/MDH2 oxidoreductase family. DlgD subfamily. As to quaternary structure, homodimer.

It localises to the cytoplasm. The enzyme catalyses 3-dehydro-L-gulonate + NAD(+) = 2,3-dioxo-L-gulonate + NADH + H(+). It carries out the reaction 3-dehydro-L-gulonate + NADP(+) = 2,3-dioxo-L-gulonate + NADPH + H(+). Its function is as follows. Catalyzes the reduction of 2,3-diketo-L-gulonate in the presence of NADH, to form 3-keto-L-gulonate. The chain is 2,3-diketo-L-gulonate reductase from Salmonella heidelberg (strain SL476).